Consider the following 362-residue polypeptide: Peptide chain release factor 1 (362 aa).

The residue at position 237 (Gln237) is an N5-methylglutamine.

This sequence belongs to the prokaryotic/mitochondrial release factor family. Methylated by PrmC. Methylation increases the termination efficiency of RF1.

The protein localises to the cytoplasm. Peptide chain release factor 1 directs the termination of translation in response to the peptide chain termination codons UAG and UAA. This is Peptide chain release factor 1 from Aeromonas salmonicida (strain A449).